Here is a 676-residue protein sequence, read N- to C-terminus: MKLAACFLTLLPGFAVAASWTSPGFPAFSEQGTGTFVSHAQLPKGTRPLTLNFDQQCWQPADAIKLNQMLSLQPCSNTPPQWRLFRDGEYTLQIDTRSGTPTLMISIQNAAEPVASLVRECPKWDGLPLTVDVSATFPEGAAVRDYYSQQIAIVKNGQIMLQPAATSNGLLLLERAETDTSAPFDWHNATVYFVLTDRFENGDPSNDQSYGRHKDGMAEIGTFHGGDLRGLTNKLDYLQQLGVNALWISAPFEQIHGWVGGGTKGDFPHYAYHGYYTQDWTNLDANMGNEADLRTLVDSAHQRGIRILFDVVMNHTGYATLADMQEYQFGALYLSGDEVKKSLGERWSDWKPAAGQTWHSFNDYINFSDKTGWDKWWGKNWIRTDIGDYDNPGFDDLTMSLAFLPDIKTESTTASGLPVFYKNKMDTHAKAIDGYTPRDYLTHWLSQWVRDYGIDGFRVDTAKHVELPAWQQLKTEASAALREWKKANPDKALDDKPFWMTGEAWGHGVMQSDYYRHGFDAMINFDYQEQAAKAVDCLAQMDTTWQQMAEKLQGFNVLSYLSSHDTRLFREGGDKAAELLLLAPGAVQIFYGDESSRPFGPTGSDPLQGTRSDMNWQDVSGKSAASVAHWQKISQFRARHPAIGAGKQTTLLLKQGYGFVREHGDDKVLVVWAGQQ.

The N-terminal stretch at 1–17 is a signal peptide; sequence MKLAACFLTLLPGFAVA. 2 cysteine pairs are disulfide-bonded: cysteine 57–cysteine 75 and cysteine 121–cysteine 537. Asparagine 314 serves as a coordination point for Ca(2+). Aspartate 460 (nucleophile) is an active-site residue. Histidine 464 serves as a coordination point for Ca(2+). The active-site Proton donor is the glutamate 503.

It belongs to the glycosyl hydrolase 13 family. As to quaternary structure, monomer. Ca(2+) serves as cofactor.

The protein resides in the periplasm. The enzyme catalyses Endohydrolysis of (1-&gt;4)-alpha-D-glucosidic linkages in polysaccharides containing three or more (1-&gt;4)-alpha-linked D-glucose units.. Functionally, since only maltooligosaccharides up to a chain length of 6 glucose units are actively transported through the cytoplasmic membrane via the membrane-bound complex of three proteins, MalF, MalG, and MalK, longer maltooligosaccharides must first be degraded by the periplasmic alpha-amylase, the MalS protein. This chain is Periplasmic alpha-amylase (malS), found in Escherichia coli (strain K12).